The primary structure comprises 146 residues: Large ribosomal subunit protein uL15 (146 aa).

Residues 1-13 (MKLHELKPAEGSR) are compositionally biased toward basic and acidic residues. The disordered stretch occupies residues 1 to 51 (MKLHELKPAEGSRKVRNRVGRGTSSGNGKTSGRGQKGQKARSGGGVRLGFE). Gly residues-rich tracts occupy residues 23–35 (TSSGNGKTSGRGQ) and 42–51 (SGGGVRLGFE).

It belongs to the universal ribosomal protein uL15 family. In terms of assembly, part of the 50S ribosomal subunit.

In terms of biological role, binds to the 23S rRNA. The chain is Large ribosomal subunit protein uL15 from Streptococcus pneumoniae serotype 2 (strain D39 / NCTC 7466).